The sequence spans 78 residues: Major outer membrane lipoprotein Lpp 1 (78 aa).

The N-terminal stretch at 1 to 20 (MNRTKLVLGAVILGSTLLAG) is a signal peptide. A lipid anchor (N-palmitoyl cysteine) is attached at Cys21. Cys21 carries the S-diacylglycerol cysteine lipid modification. 2 repeats span residues 24–34 (NAKIDQLSSDV) and 38–48 (NAKVDQLSNDV). Positions 27–75 (IDQLSSDVQTLNAKVDQLSNDVNAMRSDVQAAKDDAARANQRLDNQATK) form a coiled coil. Residues 56–78 (QAAKDDAARANQRLDNQATKYRK) form a disordered region. Residues 68–78 (RLDNQATKYRK) are compositionally biased toward polar residues. Residue Lys78 is modified to N6-murein peptidoglycan lysine.

It belongs to the Lpp family. In terms of assembly, homotrimer.

The protein resides in the cell outer membrane. It localises to the secreted. It is found in the cell wall. In terms of biological role, a highly abundant outer membrane lipoprotein that controls the distance between the inner and outer membranes. The only protein known to be covalently linked to the peptidoglycan network (PGN). Also non-covalently binds the PGN. The link between the cell outer membrane and PGN contributes to maintenance of the structural and functional integrity of the cell envelope, and maintains the correct distance between the PGN and the outer membrane. This chain is Major outer membrane lipoprotein Lpp 1, found in Salmonella paratyphi A (strain ATCC 9150 / SARB42).